The sequence spans 191 residues: Cytochrome c oxidase subunit 6b-1 (191 aa).

Residues 1–14 (MADAVNAQTPSLSE) show a composition bias toward polar residues. A disordered region spans residues 1–126 (MADAVNAQTP…IKLETAPADF (126 aa)). A2 carries the post-translational modification N-acetylalanine. Basic and acidic residues-rich tracts occupy residues 16 to 37 (YHLE…KEVA) and 45 to 56 (EEVKTEQAKEES). Over residues 72–98 (APESTEVASEAPAAAEDNAEETPAAAE) the composition is skewed to low complexity. The segment covering 99 to 114 (ENNDENASEEVAEETP) has biased composition (acidic residues). Residues 134 to 177 (TRHCFTRYVEYHRCVAAKGDDAPECDKFAKFYRSLCPSEWVDRW) enclose the CHCH domain. The Cx9C motif motif lies at 137-147 (CFTRYVEYHRC). Disulfide bonds link C137/C169 and C147/C158. Positions 158–169 (CDKFAKFYRSLC) match the Cx10C motif motif.

The protein belongs to the cytochrome c oxidase subunit 6B (TC 3.D.4.8) family. In terms of tissue distribution, expressed in the whole plant.

The protein localises to the mitochondrion. In terms of biological role, this protein is one of the nuclear-coded polypeptide chains of cytochrome c oxidase, the terminal oxidase in mitochondrial electron transport. This protein may be one of the heme-binding subunits of the oxidase. The protein is Cytochrome c oxidase subunit 6b-1 (COX6B-1) of Arabidopsis thaliana (Mouse-ear cress).